Reading from the N-terminus, the 96-residue chain is Neurotoxin beta-KTx 31.1 (96 aa).

Residues 1 to 21 (MQAKRTILLLLLLGMVALSSC) form the signal peptide. The propeptide occupies 22–29 (GLREKHVQ). Residues 56–93 (QYGCPIIKDYCSFHCNDLEKHEGYCHGTKCKCNIPNQY) form the BetaSPN-type CS-alpha/beta domain. Intrachain disulfides connect C59-C80, C66-C85, and C70-C87.

This sequence belongs to the long chain scorpion toxin family. Class 1 subfamily. In terms of tissue distribution, expressed by the venom gland.

It localises to the secreted. Inhibits voltage-gated potassium channel. The protein is Neurotoxin beta-KTx 31.1 of Lychas mucronatus (Chinese swimming scorpion).